Reading from the N-terminus, the 166-residue chain is Small ribosomal subunit protein uS4 (166 aa).

Residues 103-165 (RRLQTVVYKK…PTSPYFKKAQ (63 aa)) enclose the S4 RNA-binding domain.

Belongs to the universal ribosomal protein uS4 family. In terms of assembly, part of the 30S ribosomal subunit. Contacts protein S5. The interaction surface between S4 and S5 is involved in control of translational fidelity.

In terms of biological role, one of the primary rRNA binding proteins, it binds directly to 16S rRNA where it nucleates assembly of the body of the 30S subunit. With S5 and S12 plays an important role in translational accuracy. The chain is Small ribosomal subunit protein uS4 from Ignicoccus hospitalis (strain KIN4/I / DSM 18386 / JCM 14125).